A 535-amino-acid chain; its full sequence is Phosphoenolpyruvate carboxykinase (ATP) (535 aa).

Substrate is bound by residues R59, Y201, and K207. ATP is bound by residues K207, H226, and 243–251 (GLSGTGKTT). Mn(2+) contacts are provided by K207 and H226. D264 provides a ligand contact to Mn(2+). Residues E292, R328, 444–445 (RI), and T450 each bind ATP. R328 lines the substrate pocket.

It belongs to the phosphoenolpyruvate carboxykinase (ATP) family. Requires Mn(2+) as cofactor.

The protein localises to the cytoplasm. It catalyses the reaction oxaloacetate + ATP = phosphoenolpyruvate + ADP + CO2. It participates in carbohydrate biosynthesis; gluconeogenesis. Involved in the gluconeogenesis. Catalyzes the conversion of oxaloacetate (OAA) to phosphoenolpyruvate (PEP) through direct phosphoryl transfer between the nucleoside triphosphate and OAA. This Parabacteroides distasonis (strain ATCC 8503 / DSM 20701 / CIP 104284 / JCM 5825 / NCTC 11152) protein is Phosphoenolpyruvate carboxykinase (ATP).